Reading from the N-terminus, the 137-residue chain is Small ribosomal subunit protein bS6 (137 aa).

Belongs to the bacterial ribosomal protein bS6 family.

Its function is as follows. Binds together with bS18 to 16S ribosomal RNA. The protein is Small ribosomal subunit protein bS6 of Sulfurimonas denitrificans (strain ATCC 33889 / DSM 1251) (Thiomicrospira denitrificans (strain ATCC 33889 / DSM 1251)).